Consider the following 592-residue polypeptide: Delta-like protein 3 (592 aa).

Residues 1 to 32 form the signal peptide; the sequence is MVSLQVSPLSQTLILAFLLPQALPAGVFELQI. Over 33 to 490 the chain is Extracellular; the sequence is HSFGPGPGLG…LRQADPQRFL (458 aa). In terms of domain architecture, DSL spans 174-213; it reads ARCEPPAVGAACARLCRSRSAPSRCGPGLRPCTPFPDECE. EGF-like domains lie at 214-247, 272-308, 310-349, 351-387, 389-425, and 427-463; these read APSV…PLCT, GPGP…LRCE, SGVT…SNCE, RVDR…PRCE, DLDD…RDCR, and RADP…VRCE. 18 cysteine pairs are disulfide-bonded: C218/C229, C222/C235, C237/C246, C276/C287, C281/C296, C298/C307, C314/C325, C319/C337, C339/C348, C355/C366, C360/C375, C377/C386, C393/C404, C398/C413, C415/C424, C431/C442, C436/C451, and C453/C462. A helical transmembrane segment spans residues 491-511; it reads LPPALGLLVAAGLAGAALLVI. At 512–592 the chain is on the cytoplasmic side; the sequence is HVRRRGPGQD…REDWLIQVLF (81 aa). Residues 548–567 form a disordered region; that stretch reads QDGAGDGPSSSADWNHPEDG.

As to quaternary structure, can bind and activate Notch-1 or another Notch receptor. Post-translationally, ubiquitinated by MIB (MIB1 or MIB2), leading to its endocytosis and subsequent degradation. As to expression, predominantly expressed in the neuroectoderm and paraxial mesoderm during embryogenesis.

The protein localises to the membrane. In terms of biological role, inhibits primary neurogenesis. May be required to divert neurons along a specific differentiation pathway. Plays a role in the formation of somite boundaries during segmentation of the paraxial mesoderm. The polypeptide is Delta-like protein 3 (Dll3) (Mus musculus (Mouse)).